Here is a 735-residue protein sequence, read N- to C-terminus: NAD(P)H-quinone oxidoreductase subunit 5, chloroplastic (735 aa).

Transmembrane regions (helical) follow at residues 9-29, 40-60, 89-109, 125-145, 147-167, 184-204, 219-239, 258-278, 280-300, 327-347, 354-374, 396-416, 425-445, 540-560, 600-620, and 714-734; these read WIIPFVPLPIPILIGMGLLLF, WAFPNILLLSIVMIFSLDLSI, IDSLTSIMSILITTVGIFVLI, FAYMSLFNTSMLGLVTSCNLI, IYIFWELVGMCSYLLIGFWFT, IGDFGLLLGILGFYWITGSFE, NEVHFLFVTLCASLLFAGAVA, TPISALIHAATMVAAGIFLVA, LLPLFIVIPYIMNLISLIGII, LGYMMLALGMGSYRAALFHLI, ALLFLASGSIIHSMEAIVGYS, IAFLVGTLSLCGIPPLACFWS, WLYSPIFAIIAWSTAGLTAFY, LFPMLILLLFTLFVGAIAIPF, FSVSIACFGIFTAFLLYKPFY, and FYLLLYLVYVFIFLVISYFIL.

This sequence belongs to the complex I subunit 5 family. In terms of assembly, NDH is composed of at least 16 different subunits, 5 of which are encoded in the nucleus.

The protein resides in the plastid. The protein localises to the chloroplast thylakoid membrane. The enzyme catalyses a plastoquinone + NADH + (n+1) H(+)(in) = a plastoquinol + NAD(+) + n H(+)(out). It catalyses the reaction a plastoquinone + NADPH + (n+1) H(+)(in) = a plastoquinol + NADP(+) + n H(+)(out). Functionally, NDH shuttles electrons from NAD(P)H:plastoquinone, via FMN and iron-sulfur (Fe-S) centers, to quinones in the photosynthetic chain and possibly in a chloroplast respiratory chain. The immediate electron acceptor for the enzyme in this species is believed to be plastoquinone. Couples the redox reaction to proton translocation, and thus conserves the redox energy in a proton gradient. The protein is NAD(P)H-quinone oxidoreductase subunit 5, chloroplastic (ndhF) of Gossypium hirsutum (Upland cotton).